The following is a 368-amino-acid chain: MNSSRTRVAVIFGGRSNEHSVSCVSAGSVLSNLDPDRYDVVPIGITVDGSWVLGSSDPSSLAISGRALPSVDKDGTSVVLSADPTREGEVISFDGSDAGAVLASVDVVFPVLHGAYGEDGTIQGLLELAGVPYVGPGVLASAAGMDKEFTKKLLAAEGLPVGVQVVLRPGIATLTEEQKAELGLPVFVKPARGGSSIGITRVSNWDGLDGAIAHARLHDPKVIVEGAIIGREVECGVLEFPNGDVKASVVAEIRMPDADTDSDAFYDFDTKYLDDVCEFDIPAKLDESVSDQIRELAVRAFKALDCQGLSRVDFFVTADGPVINEINTMPGFTSISMYPKMWNATGIDYRTLISTLVDTAIARGTGLR.

An ATP-grasp domain is found at 151–358 (KKLLAAEGLP…YRTLISTLVD (208 aa)). 179-234 (KAELGLPVFVKPARGGSSIGITRVSNWDGLDGAIAHARLHDPKVIVEGAIIGREVE) lines the ATP pocket. The Mg(2+) site is built by aspartate 313, glutamate 325, and asparagine 327.

This sequence belongs to the D-alanine--D-alanine ligase family. The cofactor is Mg(2+). Requires Mn(2+) as cofactor.

Its subcellular location is the cytoplasm. It catalyses the reaction 2 D-alanine + ATP = D-alanyl-D-alanine + ADP + phosphate + H(+). It functions in the pathway cell wall biogenesis; peptidoglycan biosynthesis. Its function is as follows. Cell wall formation. The protein is D-alanine--D-alanine ligase of Rhodococcus erythropolis (strain PR4 / NBRC 100887).